A 790-amino-acid chain; its full sequence is Serine/threonine-protein kinase DCLK3 (790 aa).

The segment at 1-37 is disordered; it reads MPAAPVLRPPPPPATPAPPAPSRPAPPIPGHRGPCDH. Pro residues predominate over residues 7-29; sequence LRPPPPPATPAPPAPSRPAPPIP. The region spanning 97–183 is the Doublecortin domain; sequence RVVTVVKLGG…KEPLTLKSIQ (87 aa). Low complexity predominate over residues 201–218; sequence HSRVPSPRLRSRLPSKLL. Disordered regions lie at residues 201–290 and 315–506; these read HSRV…SGEK and LQLG…KGII. Basic and acidic residues-rich tracts occupy residues 332–345, 352–400, 425–434, and 457–496; these read DLGRAQKRDSEKLV, RPSE…ESQD, IDMRREDRHT, and TRGEEKQAEHEKKPGGLGERRAPEKESKRKLEEKRPERPS. Residues 514 to 771 form the Protein kinase domain; the sequence is YDIGGVIGDG…AEQVLQHPWI (258 aa). Residues 520-528 and K543 each bind ATP; that span reads IGDGNFATV. D635 acts as the Proton acceptor in catalysis.

This sequence belongs to the protein kinase superfamily. CAMK Ser/Thr protein kinase family. CaMK subfamily. In terms of tissue distribution, highly expressed in brain and to a lower extent in liver and kidney.

It localises to the cytoplasm. The protein localises to the nucleus. The catalysed reaction is L-seryl-[protein] + ATP = O-phospho-L-seryl-[protein] + ADP + H(+). It catalyses the reaction L-threonyl-[protein] + ATP = O-phospho-L-threonyl-[protein] + ADP + H(+). This is Serine/threonine-protein kinase DCLK3 (Dclk3) from Mus musculus (Mouse).